The sequence spans 138 residues: Acidic phospholipase A2 Ts-A1 (138 aa).

The signal sequence occupies residues 1 to 16; sequence MRTLWIMAVLQVGVEG. Disulfide bonds link C42/C131, C44/C60, C59/C111, C65/C138, C66/C104, C73/C97, and C91/C102. 3 residues coordinate Ca(2+): F43, G45, and G47. Residue H63 is part of the active site. D64 is a Ca(2+) binding site. Residue D105 is part of the active site.

It depends on Ca(2+) as a cofactor. In terms of tissue distribution, expressed by the venom gland.

It is found in the secreted. It carries out the reaction a 1,2-diacyl-sn-glycero-3-phosphocholine + H2O = a 1-acyl-sn-glycero-3-phosphocholine + a fatty acid + H(+). In terms of biological role, snake venom phospholipase A2 (PLA2) that shows a moderate inhibition of ADP-induced human platelet aggregation when tested on platelet rich plasma. Exhibits high hydrolytic activities and prefers the anionic micelles (dPPC with deoxycholate) to the zwitterionic micelles (dPPC with Triton X-100). PLA2 catalyzes the calcium-dependent hydrolysis of the 2-acyl groups in 3-sn-phosphoglycerides. The sequence is that of Acidic phospholipase A2 Ts-A1 from Trimeresurus stejnegeri (Chinese green tree viper).